The primary structure comprises 341 residues: Ribosomal RNA small subunit methyltransferase C (341 aa).

Belongs to the methyltransferase superfamily. RsmC family. As to quaternary structure, monomer.

Its subcellular location is the cytoplasm. It carries out the reaction guanosine(1207) in 16S rRNA + S-adenosyl-L-methionine = N(2)-methylguanosine(1207) in 16S rRNA + S-adenosyl-L-homocysteine + H(+). In terms of biological role, specifically methylates the guanine in position 1207 of 16S rRNA in the 30S particle. The protein is Ribosomal RNA small subunit methyltransferase C of Vibrio parahaemolyticus serotype O3:K6 (strain RIMD 2210633).